A 65-amino-acid polypeptide reads, in one-letter code: Double gene block protein 1 (65 aa).

Positions 1-41 (MDSQRTVELTNPRGRSKERGDSGGKQKNSMGRKIANDAISE) are disordered. The span at 15–24 (RSKERGDSGG) shows a compositional bias: basic and acidic residues. The tract at residues 17–43 (KERGDSGGKQKNSMGRKIANDAISESK) is RNA-binding.

The protein belongs to the carmovirus double gene block protein 1 family. In terms of assembly, homodimer.

Its function is as follows. Cell-to-cell movement. Displays RNA-binding activity. The chain is Double gene block protein 1 from Melon necrotic spot virus (MNSV).